A 490-amino-acid polypeptide reads, in one-letter code: Cytochrome P450 2C7 (490 aa).

Arg144 is modified (dimethylated arginine). Residue Cys435 coordinates heme.

It belongs to the cytochrome P450 family. Heme serves as cofactor.

The protein resides in the endoplasmic reticulum membrane. The protein localises to the microsome membrane. It carries out the reaction an organic molecule + reduced [NADPH--hemoprotein reductase] + O2 = an alcohol + oxidized [NADPH--hemoprotein reductase] + H2O + H(+). In terms of biological role, cytochromes P450 are a group of heme-thiolate monooxygenases. In liver microsomes, this enzyme is involved in an NADPH-dependent electron transport pathway. It oxidizes a variety of structurally unrelated compounds, including steroids, fatty acids, and xenobiotics. The chain is Cytochrome P450 2C7 (Cyp2c7) from Rattus norvegicus (Rat).